Reading from the N-terminus, the 439-residue chain is Glutamyl-tRNA(Gln) amidotransferase subunit D (439 aa).

One can recognise an Asparaginase/glutaminase domain in the interval 88–419 (GKVKIISTGG…EEVKRIMLTN (332 aa)). Active-site residues include Thr98, Thr174, Asp175, and Lys253.

This sequence belongs to the asparaginase 1 family. GatD subfamily. As to quaternary structure, heterodimer of GatD and GatE.

It catalyses the reaction L-glutamyl-tRNA(Gln) + L-glutamine + ATP + H2O = L-glutaminyl-tRNA(Gln) + L-glutamate + ADP + phosphate + H(+). Functionally, allows the formation of correctly charged Gln-tRNA(Gln) through the transamidation of misacylated Glu-tRNA(Gln) in organisms which lack glutaminyl-tRNA synthetase. The reaction takes place in the presence of glutamine and ATP through an activated gamma-phospho-Glu-tRNA(Gln). The GatDE system is specific for glutamate and does not act on aspartate. This Metallosphaera sedula (strain ATCC 51363 / DSM 5348 / JCM 9185 / NBRC 15509 / TH2) protein is Glutamyl-tRNA(Gln) amidotransferase subunit D.